The primary structure comprises 157 residues: Transcription elongation factor GreA (157 aa).

The protein belongs to the GreA/GreB family.

In terms of biological role, necessary for efficient RNA polymerase transcription elongation past template-encoded arresting sites. The arresting sites in DNA have the property of trapping a certain fraction of elongating RNA polymerases that pass through, resulting in locked ternary complexes. Cleavage of the nascent transcript by cleavage factors such as GreA or GreB allows the resumption of elongation from the new 3'terminus. GreA releases sequences of 2 to 3 nucleotides. This Bartonella henselae (strain ATCC 49882 / DSM 28221 / CCUG 30454 / Houston 1) (Rochalimaea henselae) protein is Transcription elongation factor GreA.